Reading from the N-terminus, the 210-residue chain is Large ribosomal subunit protein bL25 (210 aa).

Residues 191-200 are compositionally biased toward low complexity; sequence EAPAEGAAAP. The disordered stretch occupies residues 191–210; sequence EAPAEGAAAPAPAPAKKGKK.

It belongs to the bacterial ribosomal protein bL25 family. CTC subfamily. Part of the 50S ribosomal subunit; part of the 5S rRNA/L5/L18/L25 subcomplex. Contacts the 5S rRNA. Binds to the 5S rRNA independently of L5 and L18.

This is one of the proteins that binds to the 5S RNA in the ribosome where it forms part of the central protuberance. In Paracidovorax citrulli (strain AAC00-1) (Acidovorax citrulli), this protein is Large ribosomal subunit protein bL25.